A 732-amino-acid polypeptide reads, in one-letter code: 1,4-alpha-glucan branching enzyme GlgB (732 aa).

The Nucleophile role is filled by Asp412. Glu465 functions as the Proton donor in the catalytic mechanism.

It belongs to the glycosyl hydrolase 13 family. GlgB subfamily. As to quaternary structure, monomer.

It catalyses the reaction Transfers a segment of a (1-&gt;4)-alpha-D-glucan chain to a primary hydroxy group in a similar glucan chain.. It functions in the pathway glycan biosynthesis; glycogen biosynthesis. Functionally, catalyzes the formation of the alpha-1,6-glucosidic linkages in glycogen by scission of a 1,4-alpha-linked oligosaccharide from growing alpha-1,4-glucan chains and the subsequent attachment of the oligosaccharide to the alpha-1,6 position. The polypeptide is 1,4-alpha-glucan branching enzyme GlgB (Pseudomonas aeruginosa (strain ATCC 15692 / DSM 22644 / CIP 104116 / JCM 14847 / LMG 12228 / 1C / PRS 101 / PAO1)).